The sequence spans 128 residues: MENVPNVYFNPVFIEPTFKHSLLSVYKHRLIVLFEVFVVFILIYVFFRSELNMFFMPKRKIPDPIDRLRRANLACEDDKLMIYGLPWITTQTSALSINSKPIVYKDCAKLLRSINGSQPVSLNDVLRR.

The Intravirion portion of the chain corresponds to 1 to 30; sequence MENVPNVYFNPVFIEPTFKHSLLSVYKHRL. A helical; Signal-anchor for type III membrane protein membrane pass occupies residues 31-51; that stretch reads IVLFEVFVVFILIYVFFRSEL. Residues 52-128 lie on the Virion surface side of the membrane; sequence NMFFMPKRKI…PVSLNDVLRR (77 aa). A disulfide bridge connects residues Cys75 and Cys107.

It belongs to the orthopoxvirus OPG099 family. As to quaternary structure, interacts with OPG086. Component of the entry fusion complex (EFC) composed of OPG053, OPG076, OPG086, OPG094, OPG095, OPG099, OPG107, OPG143, OPG104J5, OPG147 and OPG155. Except for OPG095 and OPG053, each of the EFC proteins is required for assembly or stability of the complex. Post-translationally, most cysteines are linked by disulfide bonds. They are created by the viral disulfide bond formation pathway, a poxvirus-specific redox pathway that operates on the cytoplasmic side of the MV membranes. In terms of processing, unglycosylated because produced in viral factories instead of the classic ER -Golgi route.

Its subcellular location is the virion membrane. Its function is as follows. Component of the entry fusion complex (EFC), which consists of 11 proteins. During cell infection, this complex mediates entry of the virion core into the host cytoplasm by a two-step mechanism consisting of lipid mixing of the viral and cellular membranes and subsequent pore formation. The sequence is that of Entry-fusion complex protein OPG094 (OPG099) from Cynomys gunnisoni (Gunnison's prairie dog).